A 306-amino-acid polypeptide reads, in one-letter code: ADP-polyphosphate phosphotransferase 2 (306 aa).

The protein belongs to the polyphosphate kinase 2 (PPK2) family. Class I subfamily.

It carries out the reaction [phosphate](n) + ATP = [phosphate](n+1) + ADP. It catalyses the reaction [phosphate](n) + GTP = [phosphate](n+1) + GDP. Functionally, uses inorganic polyphosphate (polyP) as a donor to convert ADP to ATP. Can also convert GDP to GTP, with lower efficiency. The polypeptide is ADP-polyphosphate phosphotransferase 2 (Rhizobium meliloti (strain 1021) (Ensifer meliloti)).